The following is a 716-amino-acid chain: Phosphoribosylformylglycinamidine synthase subunit PurL (716 aa).

Residue histidine 33 is part of the active site. Residue tyrosine 36 participates in ATP binding. Position 77 (glutamate 77) interacts with Mg(2+). Substrate is bound by residues 78-81 (SHNH) and arginine 100. Catalysis depends on histidine 79, which acts as the Proton acceptor. Aspartate 101 is a Mg(2+) binding site. Glutamine 225 contacts substrate. Aspartate 253 is a Mg(2+) binding site. 297-299 (ESQ) is a binding site for substrate. Residues asparagine 475 and glycine 512 each contribute to the ATP site. Asparagine 513 serves as a coordination point for Mg(2+). Serine 515 is a binding site for substrate.

The protein belongs to the FGAMS family. In terms of assembly, monomer. Part of the FGAM synthase complex composed of 1 PurL, 1 PurQ and 2 PurS subunits.

Its subcellular location is the cytoplasm. The catalysed reaction is N(2)-formyl-N(1)-(5-phospho-beta-D-ribosyl)glycinamide + L-glutamine + ATP + H2O = 2-formamido-N(1)-(5-O-phospho-beta-D-ribosyl)acetamidine + L-glutamate + ADP + phosphate + H(+). Its pathway is purine metabolism; IMP biosynthesis via de novo pathway; 5-amino-1-(5-phospho-D-ribosyl)imidazole from N(2)-formyl-N(1)-(5-phospho-D-ribosyl)glycinamide: step 1/2. Part of the phosphoribosylformylglycinamidine synthase complex involved in the purines biosynthetic pathway. Catalyzes the ATP-dependent conversion of formylglycinamide ribonucleotide (FGAR) and glutamine to yield formylglycinamidine ribonucleotide (FGAM) and glutamate. The FGAM synthase complex is composed of three subunits. PurQ produces an ammonia molecule by converting glutamine to glutamate. PurL transfers the ammonia molecule to FGAR to form FGAM in an ATP-dependent manner. PurS interacts with PurQ and PurL and is thought to assist in the transfer of the ammonia molecule from PurQ to PurL. This chain is Phosphoribosylformylglycinamidine synthase subunit PurL, found in Methanosarcina mazei (strain ATCC BAA-159 / DSM 3647 / Goe1 / Go1 / JCM 11833 / OCM 88) (Methanosarcina frisia).